The primary structure comprises 103 residues: L-rhamnose-binding lectin ELEL-1 (103 aa).

The region spanning 13–102 (VCEGSSLTIS…KYLELSYDCS (90 aa)) is the SUEL-type lectin domain. Intrachain disulfides connect cysteine 14/cysteine 45, cysteine 23/cysteine 101, cysteine 56/cysteine 88, and cysteine 69/cysteine 75.

As to quaternary structure, homodimer; disulfide-linked. Post-translationally, not glycosylated.

Rhamnose-binding lectin. Also binds alpha-D-melibiose, alpha-D-lactose, beta-D-lactose, methyl-alpha-D-galactopyranoside, methyl-beta-D--galactopyranoside and D-galactose but not D-arabinose, L-fucose, D-glucose, D-mannose, D-maltose, D-sucrose, N-acetyl-D-galactosamine, N-acetyl-D-glucosamine, N-acetyl-D-mannosamine-D-xylose or by glycoproteins orosomucoid, thyroglobulin, ovomucoid and porcine stomach mucin. Shows cation-independent hemagglutinating activity against rabbit and human erythrocytes. Agglutinates cells of Gram-positive bacterial species S.aureus but not those of Gram-negative E.coli. The chain is L-rhamnose-binding lectin ELEL-1 from Echinometra lucunter (Rock-boring urchin).